We begin with the raw amino-acid sequence, 678 residues long: Pentatricopeptide repeat-containing protein At5g39980, chloroplastic (678 aa).

The transit peptide at 1 to 64 (MYIEIASSSS…NKKVWRKQPE (64 aa)) directs the protein to the chloroplast. 14 PPR repeats span residues 154-188 (SVFAYNVVLRNVLRAKQFDIAHGLFDEMRQRALAP), 189-223 (DRYTYSTLITSFGKEGMFDSALSWLQKMEQDRVSG), 224-258 (DLVLYSNLIELSRRLCDYSKAISIFSRLKRSGITP), 259-293 (DLVAYNSMINVYGKAKLFREARLLIKEMNEAGVLP), 294-328 (NTVSYSTLLSVYVENHKFLEALSVFAEMKEVNCAL), 329-363 (DLTTCNIMIDVYGQLDMVKEADRLFWSLRKMDIEP), 364-398 (NVVSYNTILRVYGEAELFGEAIHLFRLMQRKDIEQ), 399-433 (NVVTYNTMIKIYGKTMEHEKATNLVQEMQSRGIEP), 434-468 (NAITYSTIISIWGKAGKLDRAATLFQKLRSSGVEI), 469-503 (DQVLYQTMIVAYERVGLMGHAKRLLHELKLPDNIP), 535-569 (DISVFGCMINLYSRNQRYVNVIEVFEKMRTAGYFP), 570-604 (DSNVIAMVLNAYGKQREFEKADTVYREMQEEGCVF), 605-638 (PDEVHFQMLSLYSSKKDFEMVESLFQRLESDPNV), and 639-674 (NSKELHLVVAALYERADKLNDASRVMNRMRERGILK).

Belongs to the PPR family. P subfamily.

The protein resides in the plastid. The protein localises to the chloroplast. This is Pentatricopeptide repeat-containing protein At5g39980, chloroplastic from Arabidopsis thaliana (Mouse-ear cress).